Consider the following 772-residue polypeptide: MRSLIYRQLLYNSYSVDLSDEITNIGAEKKENVTVQIGEFAQSQYAPVSWGSGETLSGNVEEQPLDGPYTPDKSNLPSNYWYLINPSNDGVVFSVTDNSTLWMFTYLVLPNTAQTSVVVNVMNETVNISIDNSGSAYKFVDYFKTSSAQAYRSRNFLITAHRLQAYKRDGDGNISNYWGSDAYGDLRVGTYFNPVPNAVINLNADFYVIPDSQQEMCTEYIRRGLPAIQTTTYVTPISYAVRSQRIARPNEDITISKASLWKEVQYNRDIVIRFVFANNIIKAGGLGYKWSEISYKANNYQYTYMRDGIEVVAHTTVSVNGVSVYDYNTGSLPTDFTIRNYDVLKESSFVYVDYWDDSQAFRNMVYVRSLNAELNQVQCVGGHYSFALPVGSWPVMQGGSVVLTFDGVTLSTQFTDYVSLNSLRFRFRCAVSEPPFRVTGTRISNLYGLPAANPMGDQQYYEASGRFSLISLVPSNDDYQTPIANSVTVRQDLERQLDEMRREFNELSANIALSQLIDLALLPLDMFSMFSGIRSTIEAAKNFATSVMKKFRKSNLAKSVNSLTDAITDAAGSISRSSTLRSANSAVSVWTDISDIVDSTDNVVTATATAAAKKFRVKEFTTEFNGVSFDDISAAVVKTKMNKLNVVDEEMLPQIITEASEKFIPNRAYRLIDGDKVYEVTTEGKYFAYLTETFEEVMFDAERFAELVTYSPVISAIIDFKTIKNLNDNYGITREQALNMLRSDPKVLRSFINQNNPIIKNRIEQLILQCRI.

Positions 65 to 225 (LDGPYTPDKS…MCTEYIRRGL (161 aa)) are spike head. A spike body and stalk (antigen domain) region spans residues 247–478 (ARPNEDITIS…LISLVPSNDD (232 aa)). A hydrophobic; possible role in virus entry into host cell region spans residues 388–408 (LPVGSWPVMQGGSVVLTFDGV). The YGL motif; interaction with ITGA4 motif lies at 447 to 449 (YGL). The stretch at 483–510 (IANSVTVRQDLERQLDEMRREFNELSAN) forms a coiled coil. The segment at 509-772 (ANIALSQLID…IEQLILQCRI (264 aa)) is spike foot.

It belongs to the rotavirus VP4 family. As to quaternary structure, homotrimer. VP4 adopts a dimeric appearance above the capsid surface, while forming a trimeric base anchored inside the capsid layer. Only hints of the third molecule are observed above the capsid surface. It probably performs a series of molecular rearrangements during viral entry. Prior to trypsin cleavage, it is flexible. The priming trypsin cleavage triggers its rearrangement into rigid spikes with approximate two-fold symmetry of their protruding parts. After an unknown second triggering event, cleaved VP4 may undergo another rearrangement, in which two VP5* subunits fold back on themselves and join a third subunit to form a tightly associated trimer, shaped like a folded umbrella. Interacts with VP6. Interacts with VP7. Homotrimer. The trimer is coiled-coil stabilized by its C-terminus, however, its N-terminus, known as antigen domain or 'body', seems to be flexible allowing it to self-associate either as a dimer or a trimer. In terms of processing, proteolytic cleavage by trypsin results in activation of VP4 functions and greatly increases infectivity. The penetration into the host cell is dependent on trypsin treatment of VP4. It produces two peptides, VP5* and VP8* that remain associated with the virion. Cleavage of VP4 by trypsin probably occurs in vivo in the lumen of the intestine prior to infection of enterocytes. Trypsin seems to be incorporated into the three-layered viral particles but remains inactive as long as the viral outer capsid is intact and would only be activated upon the solubilization of the latter.

Its subcellular location is the virion. The protein resides in the host rough endoplasmic reticulum. It localises to the host cell membrane. It is found in the host cytoplasm. The protein localises to the host cytoskeleton. Its subcellular location is the host endoplasmic reticulum-Golgi intermediate compartment. Functionally, spike-forming protein that mediates virion attachment to the host epithelial cell receptors and plays a major role in cell penetration, determination of host range restriction and virulence. Rotavirus attachment and entry into the host cell probably involves multiple sequential contacts between the outer capsid proteins VP4 and VP7, and the cell receptors. It is subsequently lost, together with VP7, following virus entry into the host cell. Following entry into the host cell, low intracellular or intravesicular Ca(2+) concentration probably causes the calcium-stabilized VP7 trimers to dissociate from the virion. This step is probably necessary for the membrane-disrupting entry step and the release of VP4, which is locked onto the virion by VP7. During the virus exit from the host cell, VP4 seems to be required to target the newly formed virions to the host cell lipid rafts. Its function is as follows. Forms the spike 'foot' and 'body' and acts as a membrane permeabilization protein that mediates release of viral particles from endosomal compartments into the cytoplasm. During entry, the part of VP5* that protrudes from the virus folds back on itself and reorganizes from a local dimer to a trimer. This reorganization may be linked to membrane penetration by exposing VP5* hydrophobic region. In integrin-dependent strains, VP5* targets the integrin heterodimer ITGA2/ITGB1 for cell attachment. Forms the head of the spikes and mediates the recognition of specific host cell surface glycans. It is the viral hemagglutinin and an important target of neutralizing antibodies. In sialic acid-dependent strains, VP8* binds to host cell sialic acid, most probably a ganglioside, providing the initial contact. In some other strains, VP8* mediates the attachment to histo-blood group antigens (HBGAs) for viral entry. This is Outer capsid protein VP4 from Homo sapiens (Human).